A 92-amino-acid polypeptide reads, in one-letter code: YcgL domain-containing protein HS_0805 (92 aa).

The YcgL domain maps to 1–85 (MLCAIYKTKR…QQENLLEQER (85 aa)).

In Histophilus somni (strain 129Pt) (Haemophilus somnus), this protein is YcgL domain-containing protein HS_0805.